Consider the following 580-residue polypeptide: Cytochrome c oxidase subunit 1 (580 aa).

The tract at residues 1–25 (MTAVAPRVDGHVAPQRPEPTGHARK) is disordered. A helical transmembrane segment spans residues 43-63 (IMYIIMSFSFFFLGGLMALLI). Fe(II)-heme a is bound at residue histidine 87. 6 consecutive transmembrane segments (helical) span residues 90–110 (VMLLLYGTPIVWGFANYVLPL), 122–142 (LNAFGFWITTVGGVAMLAGFL), 171–191 (MWIIGVGATGIGSVASAINML), 214–234 (IFVTSVLALLIFPLLLAAALG), 259–279 (LFWFFGHPEVYVLALPFFGII), and 292–312 (FGYIGLVFATLSIGALSMAVW). Positions 265 and 269 each coordinate Cu cation. The 1'-histidyl-3'-tyrosine (His-Tyr) cross-link spans 265–269 (HPEVY). Positions 314 and 315 each coordinate Cu cation. 2 helical membrane-spanning segments follow: residues 316-336 (MFVTGAVLLPFFSFMTFLISV) and 360-380 (MIWAVGFMSTFLFGGLTGIML). Heme a3 is bound at residue histidine 398. 3 helical membrane passes run 399–419 (FHYTLFGTVVFASCAGVYFWF), 434–454 (IHFWLTFVGFHGTFMVQHWLG), and 477–497 (ISTIFSFLLGLSVIPFVWNVF). Position 400 (histidine 400) interacts with Fe(II)-heme a.

Belongs to the heme-copper respiratory oxidase family. In terms of assembly, associates with subunits II, III and IV to form cytochrome c oxidase. It depends on Cu(2+) as a cofactor. Heme is required as a cofactor.

It localises to the cell membrane. The catalysed reaction is 4 Fe(II)-[cytochrome c] + O2 + 8 H(+)(in) = 4 Fe(III)-[cytochrome c] + 2 H2O + 4 H(+)(out). It participates in energy metabolism; oxidative phosphorylation. In terms of biological role, cytochrome c oxidase is the component of the respiratory chain that catalyzes the reduction of oxygen to water. Subunits 1-3 form the functional core of the enzyme complex. CO I is the catalytic subunit of the enzyme. Electrons originating in cytochrome c are transferred via the copper A center of subunit 2 and heme A of subunit 1 to the bimetallic center formed by heme A3 and copper B. The sequence is that of Cytochrome c oxidase subunit 1 (ctaD) from Corynebacterium efficiens (strain DSM 44549 / YS-314 / AJ 12310 / JCM 11189 / NBRC 100395).